Consider the following 29-residue polypeptide: Cytochrome b6-f complex subunit 8 (29 aa).

A helical transmembrane segment spans residues 3–23; it reads IVSIAWAALMVVFSFSLSLVV.

It belongs to the PetN family. As to quaternary structure, the 4 large subunits of the cytochrome b6-f complex are cytochrome b6, subunit IV (17 kDa polypeptide, PetD), cytochrome f and the Rieske protein, while the 4 small subunits are PetG, PetL, PetM and PetN. The complex functions as a dimer.

Its subcellular location is the plastid. It localises to the chloroplast thylakoid membrane. In terms of biological role, component of the cytochrome b6-f complex, which mediates electron transfer between photosystem II (PSII) and photosystem I (PSI), cyclic electron flow around PSI, and state transitions. This is Cytochrome b6-f complex subunit 8 from Phaseolus vulgaris (Kidney bean).